Consider the following 242-residue polypeptide: Uridylate kinase (242 aa).

15–18 (KLSG) contacts ATP. Position 57 (G57) interacts with UMP. 2 residues coordinate ATP: G58 and R62. UMP is bound by residues D78 and 139 to 146 (TGNPFFTT). Residues T166, Y172, and D175 each coordinate ATP.

This sequence belongs to the UMP kinase family. As to quaternary structure, homohexamer.

The protein resides in the cytoplasm. It carries out the reaction UMP + ATP = UDP + ADP. It participates in pyrimidine metabolism; CTP biosynthesis via de novo pathway; UDP from UMP (UMPK route): step 1/1. Its activity is regulated as follows. Inhibited by UTP. Catalyzes the reversible phosphorylation of UMP to UDP. This Acinetobacter baumannii (strain ATCC 17978 / DSM 105126 / CIP 53.77 / LMG 1025 / NCDC KC755 / 5377) protein is Uridylate kinase.